Reading from the N-terminus, the 708-residue chain is Polyribonucleotide nucleotidyltransferase (708 aa).

Positions 486 and 492 each coordinate Mg(2+). Positions 553-612 (PRIIKFKINPEKIRDVIGKGGAVIRALTEETGTTIDISDDGSVTIACVSSEGGEQARKRI) constitute a KH domain. An S1 motif domain is found at 622–690 (GRIYEGTVLK…EKGRLRLSMK (69 aa)).

This sequence belongs to the polyribonucleotide nucleotidyltransferase family. Mg(2+) serves as cofactor.

The protein resides in the cytoplasm. It catalyses the reaction RNA(n+1) + phosphate = RNA(n) + a ribonucleoside 5'-diphosphate. Its function is as follows. Involved in mRNA degradation. Catalyzes the phosphorolysis of single-stranded polyribonucleotides processively in the 3'- to 5'-direction. This Nitrosomonas europaea (strain ATCC 19718 / CIP 103999 / KCTC 2705 / NBRC 14298) protein is Polyribonucleotide nucleotidyltransferase.